A 203-amino-acid chain; its full sequence is Inositol diphosphatase DSP3 (203 aa).

One can recognise a Tyrosine-protein phosphatase domain in the interval 20 to 169; that stretch reads NFSMVEDGIY…FDIVSLRQCL (150 aa). The WPD loop important for active site topology stretch occupies residues 76–88; it reads FGIEGKTDPPTPM. C112 acts as the Phosphocysteine intermediate in catalysis.

The protein belongs to the protein-tyrosine phosphatase family. Atypical dual-specificity phosphatase Siw14-like subfamily. Interacts with FLZ1. Highly expressed in roots, stems and flowers. Expressed at low levels in leaves and siliques.

Its subcellular location is the nucleus. The catalysed reaction is 5-diphospho-1D-myo-inositol 1,2,3,4,6-pentakisphosphate + H2O = 1D-myo-inositol hexakisphosphate + phosphate + H(+). It catalyses the reaction 1,5-bis(diphospho)-1D-myo-inositol 2,3,4,6-tetrakisphosphate + H2O = 1-diphospho-1D-myo-inositol 2,3,4,5,6-pentakisphosphate + phosphate + 2 H(+). It carries out the reaction 3,5-bis(diphospho)-1D-myo-inositol 1,2,4,6-tetrakisphosphate + H2O = 3-diphospho-1D-myo-inositol 1,2,4,5,6-pentakisphosphate + phosphate + 2 H(+). The enzyme catalyses 6-diphospho-1D-myo-inositol pentakisphosphate + H2O = 1D-myo-inositol hexakisphosphate + phosphate + H(+). Functionally, cleaves the beta-phosphate at the 5-position of soluble inositol pyrophosphates. Has highest activity on 5-diphosphoinositol 1,2,3,4,6-pentakisphosphate (5-InsP(7)), 1,5-bis-diphosphoinositol 2,3,4,6-tetrakisphosphate (1,5-InsP(8)) and 3,5-InsP(8). Possesses phosphotyrosine phosphatase activity in vitro. Dephosphorylates the phosphoinositides PI(3,5)P2. Hydrolyzes para-nitrophenyl phosphate and O-methylfluorescein phosphate in vitro. This Arabidopsis thaliana (Mouse-ear cress) protein is Inositol diphosphatase DSP3.